We begin with the raw amino-acid sequence, 140 residues long: 6,7-dimethyl-8-ribityllumazine synthase (140 aa).

5-amino-6-(D-ribitylamino)uracil-binding positions include Phe11, 43-45 (SFD), and 67-69 (CVI). 72-73 (DT) contributes to the (2S)-2-hydroxy-3-oxobutyl phosphate binding site. The active-site Proton donor is His75. A 5-amino-6-(D-ribitylamino)uracil-binding site is contributed by Leu100. Arg115 lines the (2S)-2-hydroxy-3-oxobutyl phosphate pocket.

This sequence belongs to the DMRL synthase family. As to quaternary structure, forms an icosahedral capsid composed of 60 subunits, arranged as a dodecamer of pentamers.

The enzyme catalyses (2S)-2-hydroxy-3-oxobutyl phosphate + 5-amino-6-(D-ribitylamino)uracil = 6,7-dimethyl-8-(1-D-ribityl)lumazine + phosphate + 2 H2O + H(+). It functions in the pathway cofactor biosynthesis; riboflavin biosynthesis; riboflavin from 2-hydroxy-3-oxobutyl phosphate and 5-amino-6-(D-ribitylamino)uracil: step 1/2. Catalyzes the formation of 6,7-dimethyl-8-ribityllumazine by condensation of 5-amino-6-(D-ribitylamino)uracil with 3,4-dihydroxy-2-butanone 4-phosphate. This is the penultimate step in the biosynthesis of riboflavin. The protein is 6,7-dimethyl-8-ribityllumazine synthase of Methanococcus vannielii (strain ATCC 35089 / DSM 1224 / JCM 13029 / OCM 148 / SB).